A 91-amino-acid chain; its full sequence is Small ribosomal subunit protein uS19c (91 aa).

The protein belongs to the universal ribosomal protein uS19 family.

It localises to the plastid. The protein localises to the organellar chromatophore. Protein S19 forms a complex with S13 that binds strongly to the 16S ribosomal RNA. This Paulinella chromatophora protein is Small ribosomal subunit protein uS19c.